Reading from the N-terminus, the 171-residue chain is Photosystem I assembly protein Ycf3 (171 aa).

TPR repeat units lie at residues 35–68 (AFTY…EIDP), 72–105 (SYIL…NPSL), and 120–153 (GEQA…APSN).

It belongs to the Ycf3 family.

It is found in the plastid. Its subcellular location is the chloroplast thylakoid membrane. Essential for the assembly of the photosystem I (PSI) complex. May act as a chaperone-like factor to guide the assembly of the PSI subunits. The protein is Photosystem I assembly protein Ycf3 of Angiopteris evecta (Mule's foot fern).